The following is a 398-amino-acid chain: Succinate--CoA ligase [ADP-forming] subunit beta (398 aa).

Residues 9-253 (MALLNERGVS…AGASDPLEQE (245 aa)) form the ATP-grasp domain. ATP contacts are provided by residues K46, 53-55 (GRG), V111, and E116. The Mg(2+) site is built by N208 and D222. Residues N273 and 330–332 (GIM) contribute to the substrate site.

Belongs to the succinate/malate CoA ligase beta subunit family. As to quaternary structure, heterotetramer of two alpha and two beta subunits. Requires Mg(2+) as cofactor.

The catalysed reaction is succinate + ATP + CoA = succinyl-CoA + ADP + phosphate. It catalyses the reaction GTP + succinate + CoA = succinyl-CoA + GDP + phosphate. It participates in carbohydrate metabolism; tricarboxylic acid cycle; succinate from succinyl-CoA (ligase route): step 1/1. Its function is as follows. Succinyl-CoA synthetase functions in the citric acid cycle (TCA), coupling the hydrolysis of succinyl-CoA to the synthesis of either ATP or GTP and thus represents the only step of substrate-level phosphorylation in the TCA. The beta subunit provides nucleotide specificity of the enzyme and binds the substrate succinate, while the binding sites for coenzyme A and phosphate are found in the alpha subunit. The protein is Succinate--CoA ligase [ADP-forming] subunit beta of Zymomonas mobilis subsp. mobilis (strain ATCC 31821 / ZM4 / CP4).